The primary structure comprises 311 residues: Pyrimidine-specific ribonucleoside hydrolase RihA (311 aa).

His240 is a catalytic residue.

Belongs to the IUNH family. RihA subfamily.

Functionally, hydrolyzes cytidine or uridine to ribose and cytosine or uracil, respectively. The sequence is that of Pyrimidine-specific ribonucleoside hydrolase RihA from Salmonella schwarzengrund (strain CVM19633).